Consider the following 95-residue polypeptide: Large ribosomal subunit protein uL23 (95 aa).

It belongs to the universal ribosomal protein uL23 family. Part of the 50S ribosomal subunit. Contacts protein L29, and trigger factor when it is bound to the ribosome.

Its function is as follows. One of the early assembly proteins it binds 23S rRNA. One of the proteins that surrounds the polypeptide exit tunnel on the outside of the ribosome. Forms the main docking site for trigger factor binding to the ribosome. The protein is Large ribosomal subunit protein uL23 of Leuconostoc mesenteroides subsp. mesenteroides (strain ATCC 8293 / DSM 20343 / BCRC 11652 / CCM 1803 / JCM 6124 / NCDO 523 / NBRC 100496 / NCIMB 8023 / NCTC 12954 / NRRL B-1118 / 37Y).